A 204-amino-acid polypeptide reads, in one-letter code: Holliday junction branch migration complex subunit RuvA (204 aa).

A domain I region spans residues 1–65 (MIGRLRGAVA…SAGLRLYGFG (65 aa)). The interval 66–142 (TREDRRAFVL…PITDGPVLMT (77 aa)) is domain II. Residues 143 to 152 (APGAVAAAPA) form a flexible linker region. Residues 152-204 (AKAAPTGDAVAALMGLGVAEVNARRVVEAAAAKLGDEATVQALIKAGLQELGR) are domain III.

The protein belongs to the RuvA family. As to quaternary structure, homotetramer. Forms an RuvA(8)-RuvB(12)-Holliday junction (HJ) complex. HJ DNA is sandwiched between 2 RuvA tetramers; dsDNA enters through RuvA and exits via RuvB. An RuvB hexamer assembles on each DNA strand where it exits the tetramer. Each RuvB hexamer is contacted by two RuvA subunits (via domain III) on 2 adjacent RuvB subunits; this complex drives branch migration. In the full resolvosome a probable DNA-RuvA(4)-RuvB(12)-RuvC(2) complex forms which resolves the HJ.

The protein localises to the cytoplasm. In terms of biological role, the RuvA-RuvB-RuvC complex processes Holliday junction (HJ) DNA during genetic recombination and DNA repair, while the RuvA-RuvB complex plays an important role in the rescue of blocked DNA replication forks via replication fork reversal (RFR). RuvA specifically binds to HJ cruciform DNA, conferring on it an open structure. The RuvB hexamer acts as an ATP-dependent pump, pulling dsDNA into and through the RuvAB complex. HJ branch migration allows RuvC to scan DNA until it finds its consensus sequence, where it cleaves and resolves the cruciform DNA. The sequence is that of Holliday junction branch migration complex subunit RuvA from Caulobacter sp. (strain K31).